We begin with the raw amino-acid sequence, 952 residues long: Histone deacetylase 7 (952 aa).

2 transcription repression regions span residues 1–268 (MDLR…DSDR) and 218–546 (GPNP…EHAG). Residues 49-149 (SMDTPMPELQ…LPSDPPEHFP (101 aa)) are interaction with MEF2A. Ser109 carries the phosphoserine modification. Disordered regions lie at residues 130–224 (LSSF…PILG) and 261–283 (PARA…ILGS). Ser155 carries the phosphoserine; by MARK2, MARK3 and PKD/PRKD1 modification. The segment covering 167 to 181 (KSLERRKNPLLRKES) has biased composition (basic and acidic residues). The residue at position 181 (Ser181) is a Phosphoserine; by PKD/PRKD2. The span at 197–212 (SSPSSSSTPASGCSSP) shows a compositional bias: low complexity. Ser283 bears the Phosphoserine mark. Position 286 is a phosphothreonine (Thr286). Disordered stretches follow at residues 349 to 377 (LHWP…MQPR), 389 to 441 (KRSA…GPAP), and 460 to 510 (LPRG…SSSE). Position 358 is a phosphoserine; by PKD/PRKD1 (Ser358). Over residues 360–374 (PLPPSATAPPPPGPM) the composition is skewed to pro residues. Ser364, Ser405, Ser486, Ser487, and Ser507 each carry phosphoserine. Residues 482-503 (SRAQSSPAAPASLSAPEPASQA) are compositionally biased toward low complexity. Residues 512–865 (PARTLPFTTG…VAALLGNRVD (354 aa)) are histone deacetylase. Positions 533, 535, and 541 each coordinate Zn(2+). Ser595 bears the Phosphoserine mark. Position 618 (Cys618) interacts with Zn(2+). The active site involves His670. The interaction with SIN3A stretch occupies residues 877–952 (NLNAIRSLEA…LVEEEEPMNL (76 aa)). The Nuclear export signal motif lies at 917 to 952 (KEEVEAVTALASLSVGILAEDRPSEQLVEEEEPMNL).

Belongs to the histone deacetylase family. HD type 2 subfamily. As to quaternary structure, interacts with HDAC1, HDAC2, HDAC3, HDAC4, HDAC5, NCOR1, NCOR2, SIN3A, SIN3B, RBBP4, RBBP7, MTA1L1, SAP30 and MBD3. Interacts with KAT5 and EDNRA. Interacts with the 14-3-3 protein YWHAE, MEF2A, MEF2B and MEF2C. Interacts with ZMYND15. Interacts with KDM5B. Interacts with PML. Interacts with FOXP3. Interacts with RARA. Post-translationally, may be phosphorylated by CaMK1. Phosphorylated by the PKC kinases PKN1 and PKN2, impairing nuclear import. Phosphorylation at Ser-155 by MARK2, MARK3 and PRKD1 promotes interaction with 14-3-3 proteins and export from the nucleus. Phosphorylation at Ser-155 is a prerequisite for phosphorylation at Ser-181.

It localises to the nucleus. The protein resides in the cytoplasm. The catalysed reaction is N(6)-acetyl-L-lysyl-[histone] + H2O = L-lysyl-[histone] + acetate. It carries out the reaction N(6)-acetyl-L-lysyl-[protein] + H2O = L-lysyl-[protein] + acetate. Its function is as follows. Responsible for the deacetylation of lysine residues on the N-terminal part of the core histones (H2A, H2B, H3 and H4). Histone deacetylation gives a tag for epigenetic repression and plays an important role in transcriptional regulation, cell cycle progression and developmental events. Histone deacetylases act via the formation of large multiprotein complexes. Involved in muscle maturation by repressing transcription of myocyte enhancer factors such as MEF2A, MEF2B and MEF2C. During muscle differentiation, it shuttles into the cytoplasm, allowing the expression of myocyte enhancer factors. May be involved in Epstein-Barr virus (EBV) latency, possibly by repressing the viral BZLF1 gene. Positively regulates the transcriptional repressor activity of FOXP3. Serves as a corepressor of RARA, causing its deacetylation and inhibition of RARE DNA element binding. In association with RARA, plays a role in the repression of microRNA-10a and thereby in the inflammatory response. Also acetylates non-histone proteins, such as ALKBH5. This Homo sapiens (Human) protein is Histone deacetylase 7 (HDAC7).